The sequence spans 669 residues: Protein adenylyltransferase SelO, mitochondrial (669 aa).

The N-terminal 115 residues, 1 to 115 (MAVYRAALGA…LGLGAPPARE (115 aa)), are a transit peptide targeting the mitochondrion. ATP-binding residues include G153, G155, K176, D188, G189, R246, and R253. D338 serves as the catalytic Proton acceptor. N339 and D348 together coordinate Mg(2+). D348 contacts ATP. A disordered region spans residues 634-654 (ATDAEATEADGADGRQRSYSS). T635 is subject to Phosphothreonine. S653 carries the post-translational modification Phosphoserine. Residue U667 is a non-standard amino acid, selenocysteine.

This sequence belongs to the SELO family. Mg(2+) is required as a cofactor.

The protein resides in the mitochondrion. The catalysed reaction is L-tyrosyl-[protein] + ATP = O-(5'-adenylyl)-L-tyrosyl-[protein] + diphosphate. The enzyme catalyses L-threonyl-[protein] + ATP = 3-O-(5'-adenylyl)-L-threonyl-[protein] + diphosphate. It carries out the reaction L-seryl-[protein] + ATP = 3-O-(5'-adenylyl)-L-seryl-[protein] + diphosphate. In terms of biological role, catalyzes the transfer of adenosine 5'-monophosphate (AMP) to Ser, Thr and Tyr residues of target proteins (AMPylation). May be a redox-active mitochondrial selenoprotein which interacts with a redox target protein. In Homo sapiens (Human), this protein is Protein adenylyltransferase SelO, mitochondrial.